The following is a 676-amino-acid chain: Electrogenic aspartate/glutamate antiporter SLC25A13, mitochondrial (676 aa).

Position 2 is an N-acetylalanine (A2). The interval 2 to 295 (AAAKVALTKR…TLADIERIAP (294 aa)) is regulatory N-terminal domain. The Mitochondrial intermembrane segment spans residues 2–332 (AAAKVALTKR…LLQLAESAYR (331 aa)). EF-hand domains follow at residues 51–86 (SQPNPKTVELLSGVVDQTKDGLISFQEFVAFESVLC), 87–122 (APDALFMVAFQLFDKAGKGEVTFEDVRQVFGQTTIH), 125–157 (IPFNWDSEFVQLHFGKERKRHLTYAEFTQFLLE), and 158–193 (IQLEHAKQAFVQRDNAKTGKVTAIDFRDIMVTIRPH). 5 residues coordinate Ca(2+): D66, T68, D70, L72, and E77. The tract at residues 296-312 (LEEGMLPFNLAEAQRQQ) is linker loop domain. Residues 322-613 (FLLQLAESAY…LQRWFYVDFG (292 aa)) form a carrier domain region. Solcar repeat units lie at residues 327–419 (AESA…VRDK), 427–511 (VPLL…VKAS), and 519–607 (VSPG…LQRW). The chain crosses the membrane as a helical span at residues 333-350 (FGLGSIAGAVGATAVYPI). Residues 351–393 (DLVKTRMQNQRSTGSFVGELMYKNSFDCFKKVLRYEGFFGLYR) are Mitochondrial matrix-facing. An N6-acetyllysine mark is found at K354 and K373. Residues 394-413 (GLLPQLLGVAPEKAIKLTVN) form a helical membrane-spanning segment. Residues 414–436 (DFVRDKFMHKDGSVPLLAEIFAG) are Mitochondrial intermembrane-facing. A helical transmembrane segment spans residues 437–450 (GCAGGSQVIFTNPL). Over 451 to 485 (EIVKIRLQVAGEITTGPRVSALSVVRDLGFFGIYK) the chain is Mitochondrial matrix. K454 carries the N6-methyllysine modification. Position 485 is an N6-acetyllysine; alternate (K485). K485 carries the N6-succinyllysine; alternate modification. Residues 486–505 (GAKACFLRDIPFSAIYFPCY) traverse the membrane as a helical segment. Over 506–524 (AHVKASFANEDGQVSPGSL) the chain is Mitochondrial intermembrane. A helical transmembrane segment spans residues 525–542 (LLAGAIAGMPAASLVTPA). Over 543–581 (DVIKTRLQVAARAGQTTYSGVTDCFRKILREEGPKALWK) the chain is Mitochondrial matrix. K581 carries the post-translational modification N6-succinyllysine. A helical transmembrane segment spans residues 582–601 (GAGARVFRSSPQFGVTLLTY). Topologically, residues 602 to 676 (ELLQRWFYVD…STSKVTAVGS (75 aa)) are mitochondrial intermembrane. Positions 614-676 (GVKPVGSELV…STSKVTAVGS (63 aa)) are C-terminal domain. K663 carries the post-translational modification N6-acetyllysine. S667 bears the Phosphoserine mark.

The protein belongs to the mitochondrial carrier (TC 2.A.29) family. In terms of assembly, homodimer (via N-terminus).

Its subcellular location is the mitochondrion inner membrane. The enzyme catalyses L-aspartate(in) + L-glutamate(out) + H(+)(out) = L-aspartate(out) + L-glutamate(in) + H(+)(in). It carries out the reaction 3-sulfino-L-alanine(out) + L-glutamate(in) + H(+)(in) = 3-sulfino-L-alanine(in) + L-glutamate(out) + H(+)(out). It catalyses the reaction 3-sulfino-L-alanine(out) + L-aspartate(in) = 3-sulfino-L-alanine(in) + L-aspartate(out). Its activity is regulated as follows. L-aspartate and 3-sulfino-L-alanine uptake are both inhibited by glisoxepide. Its function is as follows. Mitochondrial electrogenic aspartate/glutamate antiporter that favors efflux of aspartate and entry of glutamate and proton within the mitochondria as part of the malate-aspartate shuttle. Also mediates the uptake of L-cysteinesulfinate (3-sulfino-L-alanine) by mitochondria in exchange of L-glutamate and proton. Can also exchange L-cysteinesulfinate with aspartate in their anionic form without any proton translocation. Lacks transport activity towards gamma-aminobutyric acid (GABA). In Rattus norvegicus (Rat), this protein is Electrogenic aspartate/glutamate antiporter SLC25A13, mitochondrial.